Reading from the N-terminus, the 128-residue chain is Adrenodoxin homolog (128 aa).

Residues 12–115 (EQIRIFFKTM…NAVFTVPRAT (104 aa)) form the 2Fe-2S ferredoxin-type domain. The [2Fe-2S] cluster site is built by C50, C56, C59, and C96.

Belongs to the adrenodoxin/putidaredoxin family. It depends on [2Fe-2S] cluster as a cofactor.

The protein resides in the mitosome. Ferredoxins are iron-sulfur proteins that transfer electrons in a wide variety of metabolic reactions. The protein is Adrenodoxin homolog of Encephalitozoon cuniculi (strain GB-M1) (Microsporidian parasite).